The chain runs to 169 residues: 16S rRNA aminocarboxypropyltransferase (169 aa).

S-adenosyl-L-methionine-binding residues include threonine 17, leucine 67, leucine 90, and threonine 109.

The protein belongs to the TDD superfamily. TSR3 family.

It localises to the cytoplasm. It catalyses the reaction an N(1)-methylpseudouridine in rRNA + S-adenosyl-L-methionine = N(1)-methyl-N(3)-[(3S)-3-amino-3-carboxypropyl]pseudouridine in rRNA + S-methyl-5'-thioadenosine + H(+). Its function is as follows. Aminocarboxypropyltransferase that catalyzes the aminocarboxypropyl transfer on pseudouridine corresponding to position 914 in M.jannaschii 16S rRNA. It constitutes the last step in biosynthesis of the hypermodified N1-methyl-N3-(3-amino-3-carboxypropyl) pseudouridine (m1acp3-Psi). In Methanothermobacter thermautotrophicus (strain ATCC 29096 / DSM 1053 / JCM 10044 / NBRC 100330 / Delta H) (Methanobacterium thermoautotrophicum), this protein is 16S rRNA aminocarboxypropyltransferase.